We begin with the raw amino-acid sequence, 331 residues long: DNA-directed RNA polymerase subunit alpha (331 aa).

An alpha N-terminal domain (alpha-NTD) region spans residues 1–235; sequence MTMHIRWRGM…KHLNPFVQYR (235 aa). Residues 255–331 are alpha C-terminal domain (alpha-CTD); sequence QLEAKLNMTL…GMRVPNQPLF (77 aa).

It belongs to the RNA polymerase alpha chain family. In terms of assembly, homodimer. The RNAP catalytic core consists of 2 alpha, 1 beta, 1 beta' and 1 omega subunit. When a sigma factor is associated with the core the holoenzyme is formed, which can initiate transcription.

It carries out the reaction RNA(n) + a ribonucleoside 5'-triphosphate = RNA(n+1) + diphosphate. DNA-dependent RNA polymerase catalyzes the transcription of DNA into RNA using the four ribonucleoside triphosphates as substrates. The protein is DNA-directed RNA polymerase subunit alpha of Rhodopirellula baltica (strain DSM 10527 / NCIMB 13988 / SH1).